The following is a 715-amino-acid chain: Eosinophil peroxidase (715 aa).

An N-terminal signal peptide occupies residues methionine 1–alanine 17. The propeptide occupies glutamine 18–glutamate 139. N-linked (GlcNAc...) asparagine glycans are attached at residues asparagine 52 and asparagine 113. Cysteine 141 and cysteine 152 are oxidised to a cystine. Aspartate 232 contributes to the heme b binding site. Histidine 233 serves as the catalytic Proton acceptor. Aspartate 234 contributes to the Ca(2+) binding site. Disulfide bonds link cysteine 253/cysteine 263 and cysteine 257/cysteine 281. Residues threonine 306, phenylalanine 308, aspartate 310, and serine 312 each contribute to the Ca(2+) site. N-linked (GlcNAc...) asparagine glycosylation is found at asparagine 327 and asparagine 363. Cysteines 359 and 370 form a disulfide. Positions 380 and 474 each coordinate heme b. Tyrosine 488 bears the 3'-nitrotyrosine mark. Intrachain disulfides connect cysteine 578-cysteine 635 and cysteine 676-cysteine 701. N-linked (GlcNAc...) asparagine glycans are attached at residues asparagine 700 and asparagine 708.

Belongs to the peroxidase family. XPO subfamily. In terms of assembly, tetramer of two light chains and two heavy chains. Requires Ca(2+) as cofactor. Heme b serves as cofactor.

The protein localises to the cytoplasmic granule. It catalyses the reaction 2 a phenolic donor + H2O2 = 2 a phenolic radical donor + 2 H2O. Functionally, mediates tyrosine nitration of secondary granule proteins in mature resting eosinophils. Shows significant inhibitory activity towards Mycobacterium tuberculosis H37Rv by inducing bacterial fragmentation and lysis. This is Eosinophil peroxidase (EPX) from Homo sapiens (Human).